Here is a 225-residue protein sequence, read N- to C-terminus: NAD(P)H-quinone oxidoreductase subunit K, chloroplastic (225 aa).

4 residues coordinate [4Fe-4S] cluster: Cys43, Cys44, Cys108, and Cys139.

This sequence belongs to the complex I 20 kDa subunit family. As to quaternary structure, NDH is composed of at least 16 different subunits, 5 of which are encoded in the nucleus. The cofactor is [4Fe-4S] cluster.

The protein resides in the plastid. It is found in the chloroplast thylakoid membrane. The catalysed reaction is a plastoquinone + NADH + (n+1) H(+)(in) = a plastoquinol + NAD(+) + n H(+)(out). The enzyme catalyses a plastoquinone + NADPH + (n+1) H(+)(in) = a plastoquinol + NADP(+) + n H(+)(out). In terms of biological role, NDH shuttles electrons from NAD(P)H:plastoquinone, via FMN and iron-sulfur (Fe-S) centers, to quinones in the photosynthetic chain and possibly in a chloroplast respiratory chain. The immediate electron acceptor for the enzyme in this species is believed to be plastoquinone. Couples the redox reaction to proton translocation, and thus conserves the redox energy in a proton gradient. This is NAD(P)H-quinone oxidoreductase subunit K, chloroplastic from Liriodendron tulipifera (Tuliptree).